We begin with the raw amino-acid sequence, 701 residues long: Triadin (701 aa).

The segment at 1–28 (MTEITAEGNASTTTTVIDSKNGSVPKSP) is disordered. At 1 to 47 (MTEITAEGNASTTTTVIDSKNGSVPKSPGKVLKRTVTEDIVTTFSSP) the chain is on the cytoplasmic side. The segment covering 8–24 (GNASTTTTVIDSKNGSV) has biased composition (polar residues). The chain crosses the membrane as a helical span at residues 48-68 (AAWLLVIALIITWSAVAVVMF). Residues 69–701 (DLVDYKNFSA…SSPGQKQQGQ (633 aa)) lie on the Lumenal side of the membrane. The N-linked (GlcNAc...) asparagine glycan is linked to Asn-75. The segment covering 117–130 (DGDEDDDDGDEDTD) has biased composition (acidic residues). Disordered stretches follow at residues 117-256 (DGDE…KHEQ), 273-654 (GDLR…TKRQ), and 676-701 (FPVT…QQGQ). 6 stretches are compositionally biased toward basic and acidic residues: residues 131-256 (KGEI…KHEQ), 303-351 (EGKE…KAPE), 365-385 (AKKD…EEHP), 391-426 (EKKE…KEET), 437-485 (GKKE…EVKP), and 492-643 (VKKE…KAKE). Asn-617 is a glycosylation site (N-linked (GlcNAc...) asparagine). The segment covering 684–701 (PGESSGQPSSPGQKQQGQ) has biased composition (low complexity).

As to quaternary structure, homooligomer of variable subunit number; disulfide-linked. Interacts with CASQ1 and RYR1 in skeletal muscle. Interacts with CASQ2. Post-translationally, phosphorylated by CaMK2. N-glycosylated. In terms of tissue distribution, detected in heart (at protein level). Skeletal and cardiac muscle.

The protein resides in the sarcoplasmic reticulum membrane. Contributes to the regulation of lumenal Ca2+ release via the sarcoplasmic reticulum calcium release channels RYR1 and RYR2, a key step in triggering skeletal and heart muscle contraction. Required for normal organization of the triad junction, where T-tubules and the sarcoplasmic reticulum terminal cisternae are in close contact. Required for normal skeletal muscle strength. Plays a role in excitation-contraction coupling in the heart and in regulating the rate of heart beats. The sequence is that of Triadin (TRDN) from Canis lupus familiaris (Dog).